Consider the following 360-residue polypeptide: MPLSRLIINNFRNLQSLDLELSPNFNFIVGHNGSGKTSLLEAIFYLGHGRSFKSHISNRIIHYQAEDFVLHARIDEGQHQWSVGIQKKRSGDTLLKINGEDGNKISDLAHLLPMQVITPEGLTLLNGGPTFRRAFLDWGLFHQYTEFYSCWANLKRLLKQRNAALHQVRSYAELKPWDTELAKLAEIVSQMRANYAEALRPEIEKTCQFFLPELEIGVSFHQGWEKGTDYAEILAQGFERDKAMGYTMIGPQKADFRFRANGLPVEDVLSRGQLKLLMCVLRLAQGEYLVAQKERQCLFLIDDFASELDPIKRELLAHRLRESGSQVFVTAITKDQLNQMQWQESEQDSLFQVQQGMLTK.

Residue glycine 30–threonine 37 coordinates ATP.

Belongs to the RecF family.

It is found in the cytoplasm. The RecF protein is involved in DNA metabolism; it is required for DNA replication and normal SOS inducibility. RecF binds preferentially to single-stranded, linear DNA. It also seems to bind ATP. This chain is DNA replication and repair protein RecF, found in Actinobacillus pleuropneumoniae serotype 5b (strain L20).